The primary structure comprises 138 residues: Acidic phospholipase A2 jerdoxin (138 aa).

Positions 1 to 16 (MRTLWIMAVLLVGVEG) are cleaved as a signal peptide. Cystine bridges form between C42–C131, C44–C60, C59–C111, C65–C138, C66–C104, C73–C97, and C91–C102. Positions 43, 45, and 47 each coordinate Ca(2+). The active site involves H63. D64 lines the Ca(2+) pocket. D105 is a catalytic residue.

This sequence belongs to the phospholipase A2 family. Group II subfamily. D49 sub-subfamily. Monomer. Ca(2+) serves as cofactor. As to expression, expressed by the venom gland.

It is found in the secreted. The catalysed reaction is a 1,2-diacyl-sn-glycero-3-phosphocholine + H2O = a 1-acyl-sn-glycero-3-phosphocholine + a fatty acid + H(+). Snake venom phospholipase A2 (PLA2) that displays edema-inducing activities, exhibits indirect hemolytic activity, and inhibits ADP-induced platelet aggregation. PLA2 catalyzes the calcium-dependent hydrolysis of the 2-acyl groups in 3-sn-phosphoglycerides. This Protobothrops jerdonii (Jerdon's pitviper) protein is Acidic phospholipase A2 jerdoxin.